The sequence spans 347 residues: NADH-ubiquinone oxidoreductase chain 2 (347 aa).

The next 11 helical transmembrane spans lie at 3–23 (PPIF…VMTS), 25–45 (HWML…PILM), 59–79 (YFLT…INLL), 96–116 (ILMT…FWVP), 122–142 (ISLS…LSIL), 149–169 (INPH…GWGG), 178–198 (IMAY…LYNP), 201–221 (MFLN…LFML), 237–257 (APLI…LPPL), 274–294 (EMII…YFYM), and 323–343 (TIFL…TPMI).

It belongs to the complex I subunit 2 family. Core subunit of respiratory chain NADH dehydrogenase (Complex I) which is composed of 45 different subunits. Interacts with TMEM242.

The protein resides in the mitochondrion inner membrane. The enzyme catalyses a ubiquinone + NADH + 5 H(+)(in) = a ubiquinol + NAD(+) + 4 H(+)(out). Core subunit of the mitochondrial membrane respiratory chain NADH dehydrogenase (Complex I) which catalyzes electron transfer from NADH through the respiratory chain, using ubiquinone as an electron acceptor. Essential for the catalytic activity and assembly of complex I. The polypeptide is NADH-ubiquinone oxidoreductase chain 2 (Viverra tangalunga (Malayan civet)).